Reading from the N-terminus, the 396-residue chain is Elongation factor Tu (396 aa).

A tr-type G domain is found at 10 to 206 (KPHVNVGTIG…ALDSYIPEPV (197 aa)). Positions 19-26 (GHIDHGKT) are G1. 19 to 26 (GHIDHGKT) contacts GTP. T26 is a binding site for Mg(2+). The tract at residues 60 to 64 (TKTVT) is G2. The G3 stretch occupies residues 83-86 (DCPG). Residues 83 to 87 (DCPGH) and 138 to 141 (NKCD) each bind GTP. The tract at residues 138 to 141 (NKCD) is G4. The segment at 176-178 (ASL) is G5.

The protein belongs to the TRAFAC class translation factor GTPase superfamily. Classic translation factor GTPase family. EF-Tu/EF-1A subfamily. As to quaternary structure, monomer.

The protein localises to the cytoplasm. It catalyses the reaction GTP + H2O = GDP + phosphate + H(+). Functionally, GTP hydrolase that promotes the GTP-dependent binding of aminoacyl-tRNA to the A-site of ribosomes during protein biosynthesis. In Sorangium cellulosum (strain So ce56) (Polyangium cellulosum (strain So ce56)), this protein is Elongation factor Tu.